Consider the following 309-residue polypeptide: MSEILIVPLKEKMSERTLWLTIVQMFYGTITVVFMLILLFLFQFSKKFSYSFYRILQLDLITNILCNLNSLFSVRFQNHLMFLPVLEFLENSIPGFLSISSRGKFLFFHLQFFTALSMNIHRISSVTHPVGHGEFWTKYFKLYYVILCGISIFFTSVLPLESHRIEMENGTLIEISNHSMTTWTLNIYAIYSSVYFIILLLVGIISIFYISRKVEQVSTRSREVARKLSLITLVYGFLYSGILLWSILMALNRYFQFCPPSFGYIFNMSLGISSDLITLSLPYILLIFDVGIRKLFCRKRRKVGAMNVP.

Helical transmembrane passes span 22 to 42 (IVQM…LFLF), 140 to 160 (FKLY…VLPL), 190 to 210 (IYSS…IFYI), 230 to 250 (LITL…ILMA), and 272 to 292 (ISSD…DVGI).

Belongs to the nematode receptor-like protein srg family.

It localises to the membrane. This chain is Serpentine receptor class gamma-47 (srg-47), found in Caenorhabditis elegans.